Here is a 362-residue protein sequence, read N- to C-terminus: Alpha-glucoside transport ATP-binding protein AglK (362 aa).

Positions 4–235 (LLLKDIRKSY…PANLFVARFI (232 aa)) constitute an ABC transporter domain. An ATP-binding site is contributed by 36–43 (GPSGCGKS).

This sequence belongs to the ABC transporter superfamily.

It is found in the cell inner membrane. Functionally, part of the binding-protein-dependent transport system for alpha-glucosides such as sucrose, maltose and trehalose. Probably responsible for energy coupling to the transport system. The chain is Alpha-glucoside transport ATP-binding protein AglK (aglK) from Rhizobium meliloti (strain 1021) (Ensifer meliloti).